We begin with the raw amino-acid sequence, 443 residues long: Xaa-Pro dipeptidase (443 aa).

The Mn(2+) site is built by Asp-246, Asp-257, His-339, Glu-384, and Glu-423.

The protein belongs to the peptidase M24B family. Bacterial-type prolidase subfamily. Requires Mn(2+) as cofactor.

It carries out the reaction Xaa-L-Pro dipeptide + H2O = an L-alpha-amino acid + L-proline. Splits dipeptides with a prolyl residue in the C-terminal position. This chain is Xaa-Pro dipeptidase, found in Escherichia coli O8 (strain IAI1).